The primary structure comprises 525 residues: ATP synthase subunit alpha (525 aa).

An ATP-binding site is contributed by 172–179 (GDRQTGKT).

This sequence belongs to the ATPase alpha/beta chains family. In terms of assembly, F-type ATPases have 2 components, CF(1) - the catalytic core - and CF(0) - the membrane proton channel. CF(1) has five subunits: alpha(3), beta(3), gamma(1), delta(1), epsilon(1). CF(0) has three main subunits: a(1), b(2) and c(9-12). The alpha and beta chains form an alternating ring which encloses part of the gamma chain. CF(1) is attached to CF(0) by a central stalk formed by the gamma and epsilon chains, while a peripheral stalk is formed by the delta and b chains.

Its subcellular location is the cell inner membrane. It carries out the reaction ATP + H2O + 4 H(+)(in) = ADP + phosphate + 5 H(+)(out). Produces ATP from ADP in the presence of a proton gradient across the membrane. The alpha chain is a regulatory subunit. The chain is ATP synthase subunit alpha from Parabacteroides distasonis (strain ATCC 8503 / DSM 20701 / CIP 104284 / JCM 5825 / NCTC 11152).